We begin with the raw amino-acid sequence, 338 residues long: Ribosomal RNA small subunit methyltransferase C (338 aa).

It belongs to the methyltransferase superfamily. RsmC family. In terms of assembly, monomer.

The protein resides in the cytoplasm. It catalyses the reaction guanosine(1207) in 16S rRNA + S-adenosyl-L-methionine = N(2)-methylguanosine(1207) in 16S rRNA + S-adenosyl-L-homocysteine + H(+). Its function is as follows. Specifically methylates the guanine in position 1207 of 16S rRNA in the 30S particle. The protein is Ribosomal RNA small subunit methyltransferase C of Buchnera aphidicola subsp. Acyrthosiphon pisum (strain APS) (Acyrthosiphon pisum symbiotic bacterium).